The primary structure comprises 518 residues: MSKSHNDKEESPDNYYFQRREQMQELQSLGINVYPHKFYFNNTFQDVFTAAETCSSNEKTNISVELVGRVIRARIHSMTNFYDVKKDNDELQIVYNKNLQGKENPIAIKIVDCIRRGDIIGFKGIVGRTKTGEISVFAHEIQILSPCLRAFPSEKNLITNPELIYRHRHIDLLVNQDSRNRFITRSKIIQHIREYFNKIGFLEVETPIMNNKVGGASARPFLTHHNELKIDLYLRVAPELFLKQLVVGGLERVFEIGKNFRNEGIDLTHNPEFTAIEFYMAYADYNDLMCIVEELLSGLVKLIKGSSKFIYQPCKRETIDEIKVPLDFSTPFKRIDILEELNKSLNIELTGENIEKPETLELLIKKAEELNIIVNNPKTLNRMLDAFIGEYIEPQCINPTFVTGFPICMSPLAKDHRSKAGITERFEMFCNGKELVNAYTELNIPDLQRKRFLMQDADANAGDDEAMPNDEDFCQVLEYGLPPTGGCGIGIDRLVMYLTDAANIRDVILFPTLKPEQK.

Belongs to the class-II aminoacyl-tRNA synthetase family. Homodimer.

The protein localises to the cytoplasm. It carries out the reaction tRNA(Lys) + L-lysine + ATP = L-lysyl-tRNA(Lys) + AMP + diphosphate. The protein is Probable lysine--tRNA ligase, cytoplasmic of Enterocytozoon bieneusi (strain H348) (Microsporidian parasite).